Reading from the N-terminus, the 114-residue chain is Large ribosomal subunit protein P1 (114 aa).

A disordered region spans residues 55–114 (EEAAAAPAAAPAASGSDDEAAADDGDDDEEADADEAAEAEDAGDDDDEEPSGEGLGDLFG). Residues 56 to 69 (EAAAAPAAAPAASG) show a composition bias toward low complexity. The segment covering 70 to 105 (SDDEAAADDGDDDEEADADEAAEAEDAGDDDDEEPS) has biased composition (acidic residues).

The protein belongs to the eukaryotic ribosomal protein P1/P2 family. In terms of assembly, part of the 50S ribosomal subunit. Homodimer, it forms part of the ribosomal stalk which helps the ribosome interact with GTP-bound translation factors. Forms a heptameric uL10/P0(P1)2(P1)2(P1)2 complex, where uL10/P0 forms an elongated spine to which the P1 dimers bind in a sequential fashion.

Functionally, forms part of the ribosomal stalk, playing a central role in the interaction of the ribosome with GTP-bound translation factors. The protein is Large ribosomal subunit protein P1 of Halobacterium salinarum (strain ATCC 700922 / JCM 11081 / NRC-1) (Halobacterium halobium).